The chain runs to 330 residues: Beta-ketoacyl-[acyl-carrier-protein] synthase III (330 aa).

Catalysis depends on residues C115 and H255. The interval Q256–R260 is ACP-binding. The active site involves N285.

The protein belongs to the thiolase-like superfamily. FabH family. As to quaternary structure, homodimer.

It localises to the cytoplasm. It carries out the reaction malonyl-[ACP] + acetyl-CoA + H(+) = 3-oxobutanoyl-[ACP] + CO2 + CoA. Its pathway is lipid metabolism; fatty acid biosynthesis. Functionally, catalyzes the condensation reaction of fatty acid synthesis by the addition to an acyl acceptor of two carbons from malonyl-ACP. Catalyzes the first condensation reaction which initiates fatty acid synthesis and may therefore play a role in governing the total rate of fatty acid production. Possesses both acetoacetyl-ACP synthase and acetyl transacylase activities. Its substrate specificity determines the biosynthesis of branched-chain and/or straight-chain of fatty acids. This is Beta-ketoacyl-[acyl-carrier-protein] synthase III from Helicobacter pylori (strain HPAG1).